The primary structure comprises 375 residues: Succinyl-diaminopimelate desuccinylase (375 aa).

Histidine 66 contacts Zn(2+). Aspartate 68 is an active-site residue. Aspartate 99 contributes to the Zn(2+) binding site. Glutamate 133 (proton acceptor) is an active-site residue. Residues glutamate 134, glutamate 162, and histidine 348 each contribute to the Zn(2+) site.

It belongs to the peptidase M20A family. DapE subfamily. In terms of assembly, homodimer. Requires Zn(2+) as cofactor. The cofactor is Co(2+).

The catalysed reaction is N-succinyl-(2S,6S)-2,6-diaminopimelate + H2O = (2S,6S)-2,6-diaminopimelate + succinate. The protein operates within amino-acid biosynthesis; L-lysine biosynthesis via DAP pathway; LL-2,6-diaminopimelate from (S)-tetrahydrodipicolinate (succinylase route): step 3/3. Its function is as follows. Catalyzes the hydrolysis of N-succinyl-L,L-diaminopimelic acid (SDAP), forming succinate and LL-2,6-diaminopimelate (DAP), an intermediate involved in the bacterial biosynthesis of lysine and meso-diaminopimelic acid, an essential component of bacterial cell walls. This chain is Succinyl-diaminopimelate desuccinylase, found in Escherichia coli O1:K1 / APEC.